A 395-amino-acid chain; its full sequence is Galactokinase (395 aa).

39-42 (EHTD) contributes to the substrate binding site. ATP contacts are provided by residues Ser73 and 127–133 (GAGLSSS). Mg(2+) is bound by residues Ser133 and Glu165. Asp177 acts as the Proton acceptor in catalysis. Tyr227 contacts substrate.

This sequence belongs to the GHMP kinase family. GalK subfamily.

The protein localises to the cytoplasm. The enzyme catalyses alpha-D-galactose + ATP = alpha-D-galactose 1-phosphate + ADP + H(+). Its pathway is carbohydrate metabolism; galactose metabolism. Functionally, catalyzes the transfer of the gamma-phosphate of ATP to D-galactose to form alpha-D-galactose-1-phosphate (Gal-1-P). This chain is Galactokinase, found in Halalkalibacterium halodurans (strain ATCC BAA-125 / DSM 18197 / FERM 7344 / JCM 9153 / C-125) (Bacillus halodurans).